The primary structure comprises 650 residues: Chaperone protein HtpG (650 aa).

Residues 1-349 (MSKTVKKFET…SSDLPLNVSR (349 aa)) are a; substrate-binding. The tract at residues 350 to 566 (EILQEDVQIK…EHGLNANMER (217 aa)) is b. Residues 567–650 (ILRAMNQTVP…VADGKAAAGE (84 aa)) are c.

It belongs to the heat shock protein 90 family. In terms of assembly, homodimer.

Its subcellular location is the cytoplasm. Molecular chaperone. Has ATPase activity. The chain is Chaperone protein HtpG from Geobacter sulfurreducens (strain ATCC 51573 / DSM 12127 / PCA).